The chain runs to 87 residues: Cell division topological specificity factor (87 aa).

Belongs to the MinE family.

Its function is as follows. Prevents the cell division inhibition by proteins MinC and MinD at internal division sites while permitting inhibition at polar sites. This ensures cell division at the proper site by restricting the formation of a division septum at the midpoint of the long axis of the cell. The chain is Cell division topological specificity factor from Roseiflexus castenholzii (strain DSM 13941 / HLO8).